The chain runs to 263 residues: Methylesterase 3 (263 aa).

Catalysis depends on S85, which acts as the Acyl-ester intermediate. Active-site charge relay system residues include D213 and H241.

It belongs to the AB hydrolase superfamily. Methylesterase family.

The catalysed reaction is methyl (indol-3-yl)acetate + H2O = (indol-3-yl)acetate + methanol + H(+). The enzyme catalyses methyl (-)-jasmonate + H2O = jasmonate + methanol + H(+). The protein operates within plant hormone biosynthesis. It functions in the pathway lipid metabolism; oxylipin biosynthesis. Methylesterase shown to have carboxylesterase activity, methyl indole-3-acetic acid (MeIAA) esterase activity and methyl jasmonate (MeJA) esterase activity in vitro. The polypeptide is Methylesterase 3 (Arabidopsis thaliana (Mouse-ear cress)).